A 108-amino-acid polypeptide reads, in one-letter code: Small ribosomal subunit protein bS16 (108 aa).

A disordered region spans residues 82–108; sequence ESKFSKNTQTENKKPVSKKTTKKSKDN. Over residues 96–108 the composition is skewed to basic residues; it reads PVSKKTTKKSKDN.

Belongs to the bacterial ribosomal protein bS16 family.

This chain is Small ribosomal subunit protein bS16, found in Mycoplasma capricolum subsp. capricolum (strain California kid / ATCC 27343 / NCTC 10154).